A 60-amino-acid chain; its full sequence is UPF0434 protein YcaR (60 aa).

It belongs to the UPF0434 family.

In Escherichia fergusonii (strain ATCC 35469 / DSM 13698 / CCUG 18766 / IAM 14443 / JCM 21226 / LMG 7866 / NBRC 102419 / NCTC 12128 / CDC 0568-73), this protein is UPF0434 protein YcaR.